Here is a 147-residue protein sequence, read N- to C-terminus: uncharacterized protein (147 aa).

Residues 3–23 traverse the membrane as a helical segment; sequence APMIGMVVLVVVLGLAVLALS.

This sequence to M.leprae ML1147.

The protein resides in the membrane. This is an uncharacterized protein from Mycobacterium tuberculosis (strain CDC 1551 / Oshkosh).